A 62-amino-acid polypeptide reads, in one-letter code: Protein DsrB (62 aa).

This sequence belongs to the DsrB family.

The sequence is that of Protein DsrB from Citrobacter koseri (strain ATCC BAA-895 / CDC 4225-83 / SGSC4696).